Reading from the N-terminus, the 217-residue chain is Ras-related protein Rab-19 (217 aa).

Positions 26, 28, 29, 30, 31, 32, 42, 43, 44, 45, and 49 each coordinate GTP. Thr31 lines the Mg(2+) pocket. Positions 39–54 (SGVYSESQQNTIGVDF) match the Switch 1 motif. Residues Thr49 and Asp72 each coordinate Mg(2+). The Switch 2 signature appears at 74-89 (AGQERFRTITQSYYRS). The GTP site is built by Gly75, Asn130, Lys131, Asp133, Ser161, Ala162, and Lys163. 2 S-geranylgeranyl cysteine lipidation sites follow: Cys215 and Cys217. The residue at position 217 (Cys217) is a Cysteine methyl ester.

Belongs to the small GTPase superfamily. Rab family. It depends on Mg(2+) as a cofactor. Expressed in a tissue-specific manner. Detected at high levels in intestine, lung and spleen, and at a lower level in kidney.

The protein localises to the cell membrane. The catalysed reaction is GTP + H2O = GDP + phosphate + H(+). Its activity is regulated as follows. Regulated by guanine nucleotide exchange factors (GEFs) which promote the exchange of bound GDP for free GTP. Regulated by GTPase activating proteins (GAPs) which increase the GTP hydrolysis activity. Inhibited by GDP dissociation inhibitors (GDIs). Its function is as follows. The small GTPases Rab are key regulators of intracellular membrane trafficking, from the formation of transport vesicles to their fusion with membranes. Rabs cycle between an inactive GDP-bound form and an active GTP-bound form that is able to recruit to membranes different set of downstream effectors directly responsible for vesicle formation, movement, tethering and fusion. This Mus musculus (Mouse) protein is Ras-related protein Rab-19.